Reading from the N-terminus, the 410-residue chain is Arginine deiminase (410 aa).

Cys-400 (amidino-cysteine intermediate) is an active-site residue.

Belongs to the arginine deiminase family.

The protein localises to the cytoplasm. The enzyme catalyses L-arginine + H2O = L-citrulline + NH4(+). The protein operates within amino-acid degradation; L-arginine degradation via ADI pathway; carbamoyl phosphate from L-arginine: step 1/2. The protein is Arginine deiminase of Streptococcus agalactiae serotype Ia (strain ATCC 27591 / A909 / CDC SS700).